The chain runs to 731 residues: Catalase-peroxidase (731 aa).

The segment at residues 98 to 227 (WHAAGTYRTA…LAAIQMGLIY (130 aa)) is a cross-link (tryptophyl-tyrosyl-methioninium (Trp-Tyr) (with M-254)). Catalysis depends on His-99, which acts as the Proton acceptor. The segment at residues 227–254 (YVNPEGPQGNPHDDEGMARDMKETFKRM) is a cross-link (tryptophyl-tyrosyl-methioninium (Tyr-Met) (with W-98)). His-269 contacts heme b.

This sequence belongs to the peroxidase family. Peroxidase/catalase subfamily. As to quaternary structure, homodimer or homotetramer. Heme b serves as cofactor. In terms of processing, formation of the three residue Trp-Tyr-Met cross-link is important for the catalase, but not the peroxidase activity of the enzyme.

It carries out the reaction H2O2 + AH2 = A + 2 H2O. The enzyme catalyses 2 H2O2 = O2 + 2 H2O. Functionally, bifunctional enzyme with both catalase and broad-spectrum peroxidase activity. The chain is Catalase-peroxidase from Sphingopyxis alaskensis (strain DSM 13593 / LMG 18877 / RB2256) (Sphingomonas alaskensis).